The following is a 334-amino-acid chain: Fructose-1,6-bisphosphatase class 1 (334 aa).

Residues E93, D117, L119, and D120 each coordinate Mg(2+). Substrate contacts are provided by residues D120 to S123, N213, Y244, and K274. E280 provides a ligand contact to Mg(2+).

Belongs to the FBPase class 1 family. In terms of assembly, homotetramer. Mg(2+) is required as a cofactor.

Its subcellular location is the cytoplasm. It carries out the reaction beta-D-fructose 1,6-bisphosphate + H2O = beta-D-fructose 6-phosphate + phosphate. Its pathway is carbohydrate biosynthesis; gluconeogenesis. The chain is Fructose-1,6-bisphosphatase class 1 from Flavobacterium johnsoniae (strain ATCC 17061 / DSM 2064 / JCM 8514 / BCRC 14874 / CCUG 350202 / NBRC 14942 / NCIMB 11054 / UW101) (Cytophaga johnsonae).